The following is a 223-amino-acid chain: Thiamine-phosphate synthase (223 aa).

4-amino-2-methyl-5-(diphosphooxymethyl)pyrimidine-binding positions include 37–41 and aspartate 72; that span reads QFREK. 2 residues coordinate Mg(2+): aspartate 73 and aspartate 92. Serine 110 provides a ligand contact to 4-amino-2-methyl-5-(diphosphooxymethyl)pyrimidine. Residue 136–138 coordinates 2-[(2R,5Z)-2-carboxy-4-methylthiazol-5(2H)-ylidene]ethyl phosphate; the sequence is TQS. 4-amino-2-methyl-5-(diphosphooxymethyl)pyrimidine is bound at residue lysine 139. 2-[(2R,5Z)-2-carboxy-4-methylthiazol-5(2H)-ylidene]ethyl phosphate-binding positions include glycine 168 and 188–189; that span reads IS.

This sequence belongs to the thiamine-phosphate synthase family. It depends on Mg(2+) as a cofactor.

It carries out the reaction 2-[(2R,5Z)-2-carboxy-4-methylthiazol-5(2H)-ylidene]ethyl phosphate + 4-amino-2-methyl-5-(diphosphooxymethyl)pyrimidine + 2 H(+) = thiamine phosphate + CO2 + diphosphate. It catalyses the reaction 2-(2-carboxy-4-methylthiazol-5-yl)ethyl phosphate + 4-amino-2-methyl-5-(diphosphooxymethyl)pyrimidine + 2 H(+) = thiamine phosphate + CO2 + diphosphate. The enzyme catalyses 4-methyl-5-(2-phosphooxyethyl)-thiazole + 4-amino-2-methyl-5-(diphosphooxymethyl)pyrimidine + H(+) = thiamine phosphate + diphosphate. It participates in cofactor biosynthesis; thiamine diphosphate biosynthesis; thiamine phosphate from 4-amino-2-methyl-5-diphosphomethylpyrimidine and 4-methyl-5-(2-phosphoethyl)-thiazole: step 1/1. Its function is as follows. Condenses 4-methyl-5-(beta-hydroxyethyl)thiazole monophosphate (THZ-P) and 2-methyl-4-amino-5-hydroxymethyl pyrimidine pyrophosphate (HMP-PP) to form thiamine monophosphate (TMP). The chain is Thiamine-phosphate synthase from Streptococcus agalactiae serotype Ia (strain ATCC 27591 / A909 / CDC SS700).